Here is a 220-residue protein sequence, read N- to C-terminus: Uracil-DNA glycosylase (220 aa).

The Proton acceptor role is filled by Asp-65.

The protein belongs to the uracil-DNA glycosylase (UDG) superfamily. UNG family.

The protein resides in the cytoplasm. The enzyme catalyses Hydrolyzes single-stranded DNA or mismatched double-stranded DNA and polynucleotides, releasing free uracil.. Functionally, excises uracil residues from the DNA which can arise as a result of misincorporation of dUMP residues by DNA polymerase or due to deamination of cytosine. This is Uracil-DNA glycosylase from Bacteroides thetaiotaomicron (strain ATCC 29148 / DSM 2079 / JCM 5827 / CCUG 10774 / NCTC 10582 / VPI-5482 / E50).